A 265-amino-acid polypeptide reads, in one-letter code: tRNA (guanine-N(1)-)-methyltransferase (265 aa).

S-adenosyl-L-methionine-binding positions include Gly110 and 129-134; that span reads LGDFVM. Positions 243–265 are disordered; sequence LAAWGAPPPPLPKRRRGAKPNPN. Residues 254-265 are compositionally biased toward basic residues; that stretch reads PKRRRGAKPNPN.

This sequence belongs to the RNA methyltransferase TrmD family. In terms of assembly, homodimer.

The protein localises to the cytoplasm. It carries out the reaction guanosine(37) in tRNA + S-adenosyl-L-methionine = N(1)-methylguanosine(37) in tRNA + S-adenosyl-L-homocysteine + H(+). Functionally, specifically methylates guanosine-37 in various tRNAs. This is tRNA (guanine-N(1)-)-methyltransferase from Deinococcus geothermalis (strain DSM 11300 / CIP 105573 / AG-3a).